The following is a 925-amino-acid chain: Protein translocase subunit SecA (925 aa).

ATP-binding positions include glutamine 87, 105-109 (GEGKT), and aspartate 512. Zn(2+)-binding residues include cysteine 910, cysteine 912, cysteine 921, and histidine 922.

It belongs to the SecA family. Monomer and homodimer. Part of the essential Sec protein translocation apparatus which comprises SecA, SecYEG and auxiliary proteins SecDF-YajC and YidC. Zn(2+) serves as cofactor.

It is found in the cell inner membrane. The protein resides in the cytoplasm. The enzyme catalyses ATP + H2O + cellular proteinSide 1 = ADP + phosphate + cellular proteinSide 2.. Part of the Sec protein translocase complex. Interacts with the SecYEG preprotein conducting channel. Has a central role in coupling the hydrolysis of ATP to the transfer of proteins into and across the cell membrane, serving both as a receptor for the preprotein-SecB complex and as an ATP-driven molecular motor driving the stepwise translocation of polypeptide chains across the membrane. In Psychrobacter sp. (strain PRwf-1), this protein is Protein translocase subunit SecA.